The following is a 208-amino-acid chain: LexA repressor (208 aa).

Residues 29 to 49 constitute a DNA-binding region (H-T-H motif); that stretch reads IREIGDSLNINSTSTVHNNIL. Active-site for autocatalytic cleavage activity residues include Ser131 and Lys168.

The protein belongs to the peptidase S24 family. In terms of assembly, homodimer.

The catalysed reaction is Hydrolysis of Ala-|-Gly bond in repressor LexA.. Represses a number of genes involved in the response to DNA damage (SOS response), including recA and lexA. In the presence of single-stranded DNA, RecA interacts with LexA causing an autocatalytic cleavage which disrupts the DNA-binding part of LexA, leading to derepression of the SOS regulon and eventually DNA repair. This is LexA repressor from Finegoldia magna (strain ATCC 29328 / DSM 20472 / WAL 2508) (Peptostreptococcus magnus).